The sequence spans 200 residues: Small ribosomal subunit protein uS4 (200 aa).

Positions 22 to 43 (TGKELERRPYAPGQHGPTQRKK) are disordered. An S4 RNA-binding domain is found at 92–170 (QRLDNIVYRL…VPEYVTFDAE (79 aa)).

This sequence belongs to the universal ribosomal protein uS4 family. In terms of assembly, part of the 30S ribosomal subunit. Contacts protein S5. The interaction surface between S4 and S5 is involved in control of translational fidelity.

In terms of biological role, one of the primary rRNA binding proteins, it binds directly to 16S rRNA where it nucleates assembly of the body of the 30S subunit. Its function is as follows. With S5 and S12 plays an important role in translational accuracy. The sequence is that of Small ribosomal subunit protein uS4 from Listeria monocytogenes serotype 4a (strain HCC23).